We begin with the raw amino-acid sequence, 463 residues long: Casein kinase 1 (463 aa).

The 270-residue stretch at 9 to 278 (FKLGRKIGSG…LKRLFRDLFI (270 aa)) folds into the Protein kinase domain. ATP contacts are provided by residues 15-23 (IGSGSFGEL) and lysine 38. Aspartate 128 serves as the catalytic Proton acceptor. A compositionally biased stretch (polar residues) spans 296 to 306 (ESNRLRSSGRT). Positions 296–448 (ESNRLRSSGR…TARNVHDDPT (153 aa)) are disordered. The segment covering 315–328 (ERTERAAARQDVPD) has biased composition (basic and acidic residues). Composition is skewed to polar residues over residues 376–396 (TSSS…SRPS) and 404–440 (NRSN…TKTA).

This sequence belongs to the protein kinase superfamily. CK1 Ser/Thr protein kinase family. Casein kinase I subfamily. In terms of assembly, monomer. In terms of processing, autophosphorylated. In terms of tissue distribution, expressed in leaves, stems, panicles and seeds. Expressed in root tissues and lamina joints.

It localises to the cytoplasm. The protein resides in the nucleus. It carries out the reaction L-seryl-[protein] + ATP = O-phospho-L-seryl-[protein] + ADP + H(+). The catalysed reaction is L-threonyl-[protein] + ATP = O-phospho-L-threonyl-[protein] + ADP + H(+). Inhibited by N-(2-aminoethyl)-5-chloroisoquinoline-8-sulfonamide (CKI-7). Its function is as follows. Casein kinases are operationally defined by their preferential utilization of acidic proteins such as caseins as substrates. Can phosphorylate casein in vitro. Required for normal root development through modulation of cell elongation. Plants silencing CKI1 show abnormal root development, with reduced number of lateral and adventitious roots, and shortened primary roots as a result of reduced cell elongation. May be involved in abscisic acid (ABA) and brassinosteroid (BR) signaling pathways. Plays an important role in the adaptive growth and fitness under low temperature (LT) conditions. May confer tolerance to LT through an auxin-dependent process. The protein is Casein kinase 1 (CKI1) of Oryza sativa subsp. japonica (Rice).